The following is a 232-amino-acid chain: Uracil-DNA glycosylase (232 aa).

The active-site Proton acceptor is the D70.

The protein belongs to the uracil-DNA glycosylase (UDG) superfamily. UNG family.

The protein resides in the cytoplasm. The enzyme catalyses Hydrolyzes single-stranded DNA or mismatched double-stranded DNA and polynucleotides, releasing free uracil.. Functionally, excises uracil residues from the DNA which can arise as a result of misincorporation of dUMP residues by DNA polymerase or due to deamination of cytosine. This is Uracil-DNA glycosylase from Campylobacter fetus subsp. fetus (strain 82-40).